We begin with the raw amino-acid sequence, 457 residues long: Argininosuccinate lyase (457 aa).

Belongs to the lyase 1 family. Argininosuccinate lyase subfamily.

Its subcellular location is the cytoplasm. It catalyses the reaction 2-(N(omega)-L-arginino)succinate = fumarate + L-arginine. It participates in amino-acid biosynthesis; L-arginine biosynthesis; L-arginine from L-ornithine and carbamoyl phosphate: step 3/3. This chain is Argininosuccinate lyase, found in Citrobacter koseri (strain ATCC BAA-895 / CDC 4225-83 / SGSC4696).